Consider the following 494-residue polypeptide: PTS system cellobiose-specific EIIC component (494 aa).

Positions 8 to 481 (MEKYLVPVAA…IITFVIWVPF (474 aa)) constitute a PTS EIIC type-3 domain. A run of 9 helical transmembrane segments spans residues 32–52 (FIGM…SAIV), 92–112 (ISAL…AFSW), 119–139 (AYGV…FAGL), 188–208 (AYFT…KLML), 227–247 (FLAI…YYII), 274–294 (IFSV…GLHG), 355–375 (AFAW…IILF), 406–426 (VVLN…SVII), and 463–483 (AIVL…PFVI).

It is found in the cell membrane. In terms of biological role, the phosphoenolpyruvate-dependent sugar phosphotransferase system (PTS), a major carbohydrate active transport system, catalyzes the phosphorylation of incoming sugar substrates concomitant with their translocation across the cell membrane. Involved in cellobiose transport with PtcA and PtcB. This system can also transport lactose. This is PTS system cellobiose-specific EIIC component from Lactococcus lactis subsp. lactis (strain IL1403) (Streptococcus lactis).